The chain runs to 435 residues: Type A flavoprotein fprA (435 aa).

The interval 48–228 is zinc metallo-hydrolase; it reads ANGTTYNAYA…PFRSFVAQVL (181 aa). Residues H98, E100, D102, H167, D186, and H243 each coordinate Fe cation. In terms of domain architecture, Flavodoxin-like spans 276 to 415; it reads LLIFYVSAYR…EGRAFGRRLA (140 aa).

The protein in the N-terminal section; belongs to the zinc metallo-hydrolase group 3 family. Homodimer. FMN is required as a cofactor. Fe cation serves as cofactor.

Its function is as follows. Low-potential electron donor to a number of redox enzymes. This Rhodobacter capsulatus (Rhodopseudomonas capsulata) protein is Type A flavoprotein fprA (fprA).